Here is an 88-residue protein sequence, read N- to C-terminus: Small ribosomal subunit protein uS15 (88 aa).

Belongs to the universal ribosomal protein uS15 family. In terms of assembly, part of the 30S ribosomal subunit. Forms a bridge to the 50S subunit in the 70S ribosome, contacting the 23S rRNA.

Its function is as follows. One of the primary rRNA binding proteins, it binds directly to 16S rRNA where it helps nucleate assembly of the platform of the 30S subunit by binding and bridging several RNA helices of the 16S rRNA. In terms of biological role, forms an intersubunit bridge (bridge B4) with the 23S rRNA of the 50S subunit in the ribosome. The chain is Small ribosomal subunit protein uS15 from Mesomycoplasma hyopneumoniae (strain 232) (Mycoplasma hyopneumoniae).